A 700-amino-acid polypeptide reads, in one-letter code: Pyrroloquinoline quinone transporter (700 aa).

An N-terminal signal peptide occupies residues methionine 1–alanine 23. The 119-residue stretch at serine 39 to glutamine 157 folds into the TBDR plug domain. Beta stranded transmembrane passes span asparagine 132–leucine 136, glycine 150–glutamine 160, proline 162–tyrosine 171, tryptophan 177–alanine 186, aspartate 195–arginine 204, leucine 220–valine 227, serine 233–serine 241, glutamine 280–serine 288, methionine 295–alanine 301, glycine 335–glycine 344, valine 350–tyrosine 358, aspartate 398–tryptophan 405, leucine 411–tyrosine 419, tryptophan 447–alanine 456, tyrosine 464–glycine 468, threonine 500–isoleucine 509, aspartate 511–glutamine 520, glycine 549–glutamine 556, arginine 563–tryptophan 570, methionine 597–tyrosine 604, tyrosine 611–arginine 617, leucine 637–asparagine 647, leucine 651–valine 659, and tyrosine 689–tryptophan 697. Residues proline 162–tryptophan 697 enclose the TBDR beta-barrel domain. A TonB C-terminal box motif is present at residues tyrosine 680–glutamate 700.

Belongs to the TonB-dependent receptor family.

It is found in the cell outer membrane. Its function is as follows. Mediates the TonB-dependent high affinity transport across the outer membrane of pyrroloquinoline quinone (PQQ), a redox cofactor required for the activity of Gcd and Asd dehydrogenases. The uptake process is energised via the TonB-ExbBD complex. Not involved in the transport of an iron-containing substrate under laboratory conditions. This Escherichia coli (strain K12) protein is Pyrroloquinoline quinone transporter.